The chain runs to 933 residues: Bifunctional uridylyltransferase/uridylyl-removing enzyme (933 aa).

The segment at 1-379 (MAKISLKLDE…TFQRRKRKLA (379 aa)) is uridylyltransferase. The segment at 380–736 (GTSDFIVDNH…VKTHQFEAVT (357 aa)) is uridylyl-removing. One can recognise an HD domain in the interval 496-619 (VDEHLIRCIG…VQSVERLKLL (124 aa)). ACT domains follow at residues 737-818 (EITV…EMIE) and 848-922 (VIEV…GIAP).

It belongs to the GlnD family. It depends on Mg(2+) as a cofactor.

The enzyme catalyses [protein-PII]-L-tyrosine + UTP = [protein-PII]-uridylyl-L-tyrosine + diphosphate. It carries out the reaction [protein-PII]-uridylyl-L-tyrosine + H2O = [protein-PII]-L-tyrosine + UMP + H(+). Uridylyltransferase (UTase) activity is inhibited by glutamine, while glutamine activates uridylyl-removing (UR) activity. Modifies, by uridylylation and deuridylylation, the PII regulatory proteins (GlnB and homologs), in response to the nitrogen status of the cell that GlnD senses through the glutamine level. Under low glutamine levels, catalyzes the conversion of the PII proteins and UTP to PII-UMP and PPi, while under higher glutamine levels, GlnD hydrolyzes PII-UMP to PII and UMP (deuridylylation). Thus, controls uridylylation state and activity of the PII proteins, and plays an important role in the regulation of nitrogen fixation and metabolism. The protein is Bifunctional uridylyltransferase/uridylyl-removing enzyme of Mesorhizobium japonicum (strain LMG 29417 / CECT 9101 / MAFF 303099) (Mesorhizobium loti (strain MAFF 303099)).